The chain runs to 353 residues: MASSWCLPLALLVSNLAVSHSAEPSSTHAKRRLAQPSPGNGNALQYPEQGFQSHGHGNVRERGGRHGGQGAHSAKANTGAGLLSRSPLHPAARHEDDGTGLDGLSPVRLEMGPGGRERENGRGGFRNPSHARENHPLGPHKGKAQGHGHHFDHRRHGGRRDKGRHTKGFFPEPELDSSLKEGSVSSTIFGSGSSAVTTVMSEHPPMLPPASTKPKKSGRGKVQGEVMPTLDMTLFDWTDYEDMKPVDAWPSSRKKDKRRSKNLSSGNVTVDSDAIEPCDHHLDCLPGSCCDLRQHECKLHNRGLNNKCYDDCMCEEGFRCYAKFHRKLHVTRRRGRCVVPESANRDQGAFITV.

The signal sequence occupies residues 1–21 (MASSWCLPLALLVSNLAVSHS). 3 disordered regions span residues 23 to 183 (EPSS…KEGS), 198 to 222 (TVMS…RGKV), and 246 to 268 (VDAW…SGNV). Positions 138–167 (GPHKGKAQGHGHHFDHRRHGGRRDKGRHTK) are enriched in basic residues. Residues 252–261 (SRKKDKRRSK) show a composition bias toward basic residues. Asn262 and Asn267 each carry an N-linked (GlcNAc...) asparagine glycan.

This sequence belongs to the draxin family.

It localises to the secreted. Chemorepulsive axon guidance protein required for the development of spinal cord and forebrain commissures. Acts as a chemorepulsive guidance protein for commissural axons during development. Able to inhibit or repel neurite outgrowth from dorsal spinal cord. In Salmo salar (Atlantic salmon), this protein is Draxin-B (draxin-B).